We begin with the raw amino-acid sequence, 82 residues long: Protein transport protein Sec61 subunit beta (82 aa).

Met-1 bears the N-acetylmethionine mark. Positions 1 to 34 are disordered; it reads MVGSGAPQRGSAAATASMRRRKPTSGAGGGGASG. Topologically, residues 1 to 55 are cytoplasmic; that stretch reads MVGSGAPQRGSAAATASMRRRKPTSGAGGGGASGGAAGSMLQFYTDDAPGLKISP. A helical transmembrane segment spans residues 56–76; the sequence is NVVLIMSIGFIAFVAVLHVMG.

This sequence belongs to the SEC61-beta family. Heterotrimeric complex composed of SEC61-alpha, SEC61-beta and SEC61-gamma.

Its subcellular location is the endoplasmic reticulum membrane. In terms of biological role, necessary for protein translocation in the endoplasmic reticulum. The protein is Protein transport protein Sec61 subunit beta of Arabidopsis thaliana (Mouse-ear cress).